A 226-amino-acid polypeptide reads, in one-letter code: Ribonuclease 3 (226 aa).

Positions 4-127 constitute an RNase III domain; the sequence is LEEFEKKLGY…VMGAIYLEKG (124 aa). Glutamate 40 contacts Mg(2+). Aspartate 44 is a catalytic residue. Positions 113 and 116 each coordinate Mg(2+). The active site involves glutamate 116. In terms of domain architecture, DRBM spans 154–223; sequence DFKTALQEFT…AKEALKILKA (70 aa).

The protein belongs to the ribonuclease III family. Homodimer. Requires Mg(2+) as cofactor.

Its subcellular location is the cytoplasm. It catalyses the reaction Endonucleolytic cleavage to 5'-phosphomonoester.. Its function is as follows. Digests double-stranded RNA. Involved in the processing of primary rRNA transcript to yield the immediate precursors to the large and small rRNAs (23S and 16S). Processes some mRNAs, and tRNAs when they are encoded in the rRNA operon. Processes pre-crRNA and tracrRNA of type II CRISPR loci if present in the organism. The sequence is that of Ribonuclease 3 from Nitratiruptor sp. (strain SB155-2).